A 215-amino-acid chain; its full sequence is Large ribosomal subunit protein uL16 (215 aa).

The tract at residues 1–22 (MGRRPARCYRQPKGKPYPKSRY) is disordered.

This sequence belongs to the universal ribosomal protein uL16 family.

This Tetrahymena thermophila (strain SB210) protein is Large ribosomal subunit protein uL16 (RPL10).